We begin with the raw amino-acid sequence, 1224 residues long: Potassium channel subfamily T member 1 (1224 aa).

Residues 1-37 (MARAKLPRSPSEGKAGPGDTPAGAAAPEEPHGLSPLL) form a disordered region. At 1 to 79 (MARAKLPRSP…LFFIKNQRSS (79 aa)) the chain is on the cytoplasmic side. A compositionally biased stretch (low complexity) spans 13–27 (GKAGPGDTPAGAAAP). Residues 80 to 112 (LRIRLFNFSLKLLTCLLYIVRVLLDNPDQGIGC) traverse the membrane as a helical segment. The Extracellular segment spans residues 113-139 (WGCTKYNYTFNGSSSEFHWAPILWVER). N-linked (GlcNAc...) asparagine glycosylation is found at N119 and N123. Residues 140–164 (KMALWVIQVIVATISFLETMLIIYL) form a helical membrane-spanning segment. Residues 165–178 (SYKGNIWEQIFHVS) are Cytoplasmic-facing. The chain crosses the membrane as a helical span at residues 179–194 (FVLEMINTLPFIITVF). Topologically, residues 195-201 (WPPLRNL) are extracellular. The helical transmembrane segment at 202-219 (FIPVFLNCWLAKHALENM) threads the bilayer. Residues 220 to 232 (INDFHRAILRTQS) are Cytoplasmic-facing. A helical membrane pass occupies residues 233-260 (AMFNQVLILFCTLLCLVFTGTCGIQHLE). Topologically, residues 261-267 (RAGGNLN) are extracellular. An intramembrane region (pore-forming) is located at residues 268–288 (LLTSFYFCIVTFSTVGFGDVT). K(+)-binding residues include V282 and G283. Residues 289–290 (PK) lie on the Extracellular side of the membrane. The chain crosses the membrane as a helical span at residues 291–324 (IWPSQLLVVILICVTLVVLPLQFEELVYLWMERQ). Topologically, residues 325–1224 (KSGGNYSRHR…NPETRDETQL (900 aa)) are cytoplasmic. Residues 338–474 (EKHVVLCVSS…FHVKFADHVV (137 aa)) form the RCK N-terminal 1 domain. Residues L499, H502, S524, and N526 each coordinate Na(+). Residues 644–675 (QNTDCRPSQGGSGGDGTKLTLPTENGSGSRRP) form a disordered region. Residues 663–673 (TLPTENGSGSR) are compositionally biased toward polar residues. Residues C744 and C745 each contribute to the Zn(2+) site. K(+)-binding residues include R747 and K750. Positions 747 and 750 each coordinate Na(+). The Zn(2+) site is built by C752 and H754. The K(+) site is built by N755, Y757, Y763, and G764. Y757 is a binding site for Na(+). F765 contacts Na(+). The region spanning 767–907 (NKLIIVSAET…QFRAKDSYSL (141 aa)) is the RCK N-terminal 2 domain. K(+)-binding residues include S773, L804, D806, G828, and D851. Disordered stretches follow at residues 1038-1066 (REAK…ADPV) and 1198-1224 (SSSQ…ETQL). Composition is skewed to low complexity over residues 1045–1055 (GTRAASGSGST) and 1198–1215 (SSSQ…SSCN).

It belongs to the potassium channel family. Calcium-activated (TC 1.A.1.3) subfamily. KCa4.1/KCNT1 sub-subfamily. In terms of assembly, homotetramer; which constitutes the Na(+)-activated K(+) channel. Interacts with KCNT2; these heterodimer channels differ from the homomers in their unitary conductance, kinetic behavior, subcellular localization, and response to activation of protein kinase C. Interacts (via C-terminus) with FMR1; this interaction alters gating properties of KCNT1. Interacts with CRBN via its cytoplasmic C-terminus. In terms of processing, phosphorylated by protein kinase C. Phosphorylation of the C-terminal domain increases channel activity. Enriched in the brainstem and olfactory bulb and detected at significant levels in four different brain regions.

It localises to the cell membrane. The enzyme catalyses K(+)(in) = K(+)(out). With respect to regulation, activated by high intracellular Na(+). In addition to activation by Na(+), is cooperatively activated by intracellular Cl(-) levels. Inhibited by Zn(2+). Activated upon stimulation of G-protein coupled receptors, such as CHRM1 and GRIA1. Sodium-activated K(+) channel. Acts as an important mediator of neuronal membrane excitability. Contributes to the delayed outward currents. Regulates neuronal bursting in sensory neurons. Contributes to synaptic development and plasticity. The sequence is that of Potassium channel subfamily T member 1 (Kcnt1) from Mus musculus (Mouse).